We begin with the raw amino-acid sequence, 337 residues long: DNA-directed RNA polymerase subunit alpha (337 aa).

Positions 1–233 (MVREKVRVST…DLFIPFLHAE (233 aa)) are alpha N-terminal domain (alpha-NTD). Positions 267-337 (IALKSIFIDQ…KAFHNPFTEE (71 aa)) are alpha C-terminal domain (alpha-CTD).

Belongs to the RNA polymerase alpha chain family. In plastids the minimal PEP RNA polymerase catalytic core is composed of four subunits: alpha, beta, beta', and beta''. When a (nuclear-encoded) sigma factor is associated with the core the holoenzyme is formed, which can initiate transcription.

The protein localises to the plastid. Its subcellular location is the chloroplast. The catalysed reaction is RNA(n) + a ribonucleoside 5'-triphosphate = RNA(n+1) + diphosphate. DNA-dependent RNA polymerase catalyzes the transcription of DNA into RNA using the four ribonucleoside triphosphates as substrates. The sequence is that of DNA-directed RNA polymerase subunit alpha from Eucalyptus globulus subsp. globulus (Tasmanian blue gum).